The primary structure comprises 95 residues: DASH complex subunit DAD3 (95 aa).

Belongs to the DASH complex DAD3 family. Component of the DASH complex consisting of ASK1, DAD1, DAD2, DAD3, DAD4, DAM1, DUO1, HSK3, SPC19 and SPC34, with a stoichiometry of one copy of each subunit per complex. Multiple DASH complexes oligomerize to form a ring that encircles spindle microtubules and organizes the rod-like NDC80 complexes of the outer kinetochore. DASH complex oligomerization strengthens microtubule attachments. On cytoplasmic microtubules, DASH complexes appear to form patches instead of rings.

Its subcellular location is the chromosome. It localises to the centromere. The protein resides in the kinetochore. The protein localises to the cytoplasm. It is found in the cytoskeleton. Its subcellular location is the spindle. It localises to the nucleus. Component of the DASH complex that connects microtubules with kinetochores and couples microtubule depolymerisation to chromosome movement; it is involved in retrieving kinetochores to the spindle poles before their re-orientation on the spindle in early mitosis and allows microtubule depolymerization to pull chromosomes apart and resist detachment during anaphase. Kinetochores, consisting of a centromere-associated inner segment and a microtubule-contacting outer segment, play a crucial role in chromosome segregation by mediating the physical connection between centromeric DNA and microtubules. Kinetochores also serve as an input point for the spindle assembly checkpoint, which delays anaphase until all chromosomes have bioriented on the mitotic spindle. The polypeptide is DASH complex subunit DAD3 (Chaetomium thermophilum (strain DSM 1495 / CBS 144.50 / IMI 039719) (Thermochaetoides thermophila)).